Reading from the N-terminus, the 261-residue chain is 4-phosphopantoate--beta-alanine ligase (261 aa).

ATP contacts are provided by residues Arg-17, Arg-39, 181–182, 187–188, and 199–200; these read DL, RS, and NI.

Belongs to the archaeal phosphopantothenate synthetase family. Homodimer.

The catalysed reaction is (R)-4-phosphopantoate + beta-alanine + ATP = (R)-4'-phosphopantothenate + AMP + diphosphate + H(+). It participates in cofactor biosynthesis; coenzyme A biosynthesis. In terms of biological role, catalyzes the condensation of (R)-4-phosphopantoate and beta-alanine to 4'-phosphopantothenate in the CoA biosynthesis pathway. This Thermococcus onnurineus (strain NA1) protein is 4-phosphopantoate--beta-alanine ligase.